We begin with the raw amino-acid sequence, 772 residues long: Phosphoribosylformylglycinamidine synthase subunit PurL (772 aa).

The active site involves H62. 2 residues coordinate ATP: Y65 and K109. E111 lines the Mg(2+) pocket. Substrate-binding positions include 112-115 (SHNH) and R134. H113 (proton acceptor) is an active-site residue. D135 serves as a coordination point for Mg(2+). Substrate is bound at residue Q259. D287 provides a ligand contact to Mg(2+). Residue 331 to 333 (ESQ) coordinates substrate. Residues D519 and G556 each contribute to the ATP site. N557 contacts Mg(2+). Position 559 (S559) interacts with substrate.

It belongs to the FGAMS family. As to quaternary structure, monomer. Part of the FGAM synthase complex composed of 1 PurL, 1 PurQ and 2 PurS subunits.

Its subcellular location is the cytoplasm. It catalyses the reaction N(2)-formyl-N(1)-(5-phospho-beta-D-ribosyl)glycinamide + L-glutamine + ATP + H2O = 2-formamido-N(1)-(5-O-phospho-beta-D-ribosyl)acetamidine + L-glutamate + ADP + phosphate + H(+). The protein operates within purine metabolism; IMP biosynthesis via de novo pathway; 5-amino-1-(5-phospho-D-ribosyl)imidazole from N(2)-formyl-N(1)-(5-phospho-D-ribosyl)glycinamide: step 1/2. Part of the phosphoribosylformylglycinamidine synthase complex involved in the purines biosynthetic pathway. Catalyzes the ATP-dependent conversion of formylglycinamide ribonucleotide (FGAR) and glutamine to yield formylglycinamidine ribonucleotide (FGAM) and glutamate. The FGAM synthase complex is composed of three subunits. PurQ produces an ammonia molecule by converting glutamine to glutamate. PurL transfers the ammonia molecule to FGAR to form FGAM in an ATP-dependent manner. PurS interacts with PurQ and PurL and is thought to assist in the transfer of the ammonia molecule from PurQ to PurL. This is Phosphoribosylformylglycinamidine synthase subunit PurL from Leifsonia xyli subsp. xyli (strain CTCB07).